Consider the following 84-residue polypeptide: Anaphase-promoting complex subunit 11 (84 aa).

Residues Cys-23, Cys-26, Cys-34, Cys-37, Cys-44, Cys-51, His-53, His-56, His-58, Cys-59, Cys-73, and Cys-76 each coordinate Zn(2+). The RING-type zinc-finger motif lies at 34–77; it reads CPDCKVPGDDCPLVWGQCSHCFHMHCILKWLHAQQVQQHCPMCR.

Belongs to the RING-box family. As to quaternary structure, the mammalian APC/C is composed at least of 14 distinct subunits ANAPC1, ANAPC2, CDC27/APC3, ANAPC4, ANAPC5, CDC16/APC6, ANAPC7, CDC23/APC8, ANAPC10, ANAPC11, CDC26/APC12, ANAPC13, ANAPC15 and ANAPC16 that assemble into a complex of at least 19 chains with a combined molecular mass of around 1.2 MDa; APC/C interacts with FZR1 and FBXO5. Interacts with the cullin domain of ANAPC2. Interacts with UBE2D2. Auto-ubiquitinated. In terms of tissue distribution, expressed at high levels in skeletal muscle and heart; in moderate levels in brain, kidney, and liver; and at low levels in colon, thymus, spleen, small intestine, placenta, lung and peripheral blood leukocyte.

Its subcellular location is the cytoplasm. It localises to the nucleus. Its pathway is protein modification; protein ubiquitination. Together with the cullin protein ANAPC2, constitutes the catalytic component of the anaphase promoting complex/cyclosome (APC/C), a cell cycle-regulated E3 ubiquitin ligase that controls progression through mitosis and the G1 phase of the cell cycle. The APC/C complex acts by mediating ubiquitination and subsequent degradation of target proteins: it mainly mediates the formation of 'Lys-11'-linked polyubiquitin chains and, to a lower extent, the formation of 'Lys-48'- and 'Lys-63'-linked polyubiquitin chains. The APC/C complex catalyzes assembly of branched 'Lys-11'-/'Lys-48'-linked branched ubiquitin chains on target proteins. May recruit the E2 ubiquitin-conjugating enzymes to the complex. In Homo sapiens (Human), this protein is Anaphase-promoting complex subunit 11 (ANAPC11).